A 1976-amino-acid polypeptide reads, in one-letter code: Myosin-10 (1976 aa).

The residue at position 18 (arginine 18) is an Omega-N-methylarginine. The region spanning 31–81 (TAKKLVWIPSERHGFEAASIKEERGDEVLVELAENGKKAMVNKDDIQKMNP) is the Myosin N-terminal SH3-like domain. Residues 85–783 (SKVEDMAELT…VLAHLEEERD (699 aa)) enclose the Myosin motor domain. 178 to 185 (GESGAGKT) serves as a coordination point for ATP. The residue at position 442 (lysine 442) is an N6-acetyllysine. The segment at 661 to 683 (LTKLMATLRNTNPNFVRCIIPNH) is actin-binding. The 30-residue stretch at 786 to 815 (ITDIIIFFQAVCRGYLARKAFAKKQQQLSA) folds into the IQ domain. Positions 845 to 1976 (LQVTRQEEEL…INETQPPQSE (1132 aa)) form a coiled coil. Residues 1126–1149 (DFESEKASRNKAEKQKRDLSEELE) form a disordered region. Positions 1129 to 1149 (SEKASRNKAEKQKRDLSEELE) are enriched in basic and acidic residues. The residue at position 1145 (serine 1145) is a Phosphoserine. N6-acetyllysine occurs at positions 1241, 1301, and 1645. 2 disordered regions span residues 1697 to 1718 (ASSERARRHAEQERDELADEIA) and 1874 to 1976 (KANA…PQSE). Positions 1698 to 1708 (SSERARRHAEQ) are enriched in basic and acidic residues. At arginine 1930 the chain carries Omega-N-methylarginine. Phosphoserine is present on residues serine 1935, serine 1937, serine 1938, and serine 1939. At arginine 1940 the chain carries Omega-N-methylarginine. Residues serine 1952 and serine 1956 each carry the phosphoserine modification. Threonine 1960 carries the phosphothreonine modification. The segment covering 1967-1976 (INETQPPQSE) has biased composition (polar residues). Phosphoserine is present on serine 1975.

This sequence belongs to the TRAFAC class myosin-kinesin ATPase superfamily. Myosin family. As to quaternary structure, myosin is a hexameric protein that consists of 2 heavy chain subunits (MHC), 2 alkali light chain subunits (MLC) and 2 regulatory light chain subunits (MLC-2). Interacts with PLEKHG6. Interacts with ECPAS. Interacts with KIF26B. Interacts with LARP6. Interacts with MCC. Interacts with CFAP95. Post-translationally, phosphorylated by ABL2.

Its subcellular location is the cell projection. The protein localises to the lamellipodium. Functionally, cellular myosin that appears to play a role in cytokinesis, cell shape, and specialized functions such as secretion and capping. Involved with LARP6 in the stabilization of type I collagen mRNAs for CO1A1 and CO1A2. During cell spreading, plays an important role in cytoskeleton reorganization, focal contacts formation (in the central part but not the margins of spreading cells), and lamellipodial extension; this function is mechanically antagonized by MYH9. This is Myosin-10 (MYH10) from Bos taurus (Bovine).